The sequence spans 242 residues: MSKRRIAPLTFLRRLLLRILAALAVFWGGGIALFSVVPVPFSAVMAERQISAWLGGEFGYVAHSDWVSMADISPWMGLAVITAEDQKFPEHWGFDVPAIEKALAHNERNESRIRGASTLSQQTAKNLFLWDGRSWVRKGLEAGLTLGIETVWSKKRILTVYLNIAEFGDGIFGVEAAAQRYFHKPASRLSVSEAALLAAVLPNPLRYKANAPSGYVRSRQAWIMRQMRQLGGESFMTRNQLN.

A helical membrane pass occupies residues 19 to 39; sequence ILAALAVFWGGGIALFSVVPV.

This sequence belongs to the glycosyltransferase 51 family.

The protein resides in the cell inner membrane. It carries out the reaction [GlcNAc-(1-&gt;4)-Mur2Ac(oyl-L-Ala-gamma-D-Glu-L-Lys-D-Ala-D-Ala)](n)-di-trans,octa-cis-undecaprenyl diphosphate + beta-D-GlcNAc-(1-&gt;4)-Mur2Ac(oyl-L-Ala-gamma-D-Glu-L-Lys-D-Ala-D-Ala)-di-trans,octa-cis-undecaprenyl diphosphate = [GlcNAc-(1-&gt;4)-Mur2Ac(oyl-L-Ala-gamma-D-Glu-L-Lys-D-Ala-D-Ala)](n+1)-di-trans,octa-cis-undecaprenyl diphosphate + di-trans,octa-cis-undecaprenyl diphosphate + H(+). It participates in cell wall biogenesis; peptidoglycan biosynthesis. Functionally, peptidoglycan polymerase that catalyzes glycan chain elongation from lipid-linked precursors. This chain is Biosynthetic peptidoglycan transglycosylase, found in Salmonella paratyphi A (strain ATCC 9150 / SARB42).